Reading from the N-terminus, the 726-residue chain is Probable dipeptidyl-peptidase 5 (726 aa).

An N-terminal signal peptide occupies residues 1-19 (MGALQWLSITAAAASAVSA). N-linked (GlcNAc...) asparagine glycosylation is found at N97, N153, N259, N398, N453, and N529. The Charge relay system role is filled by S564. N611 is a glycosylation site (N-linked (GlcNAc...) asparagine). Catalysis depends on charge relay system residues D647 and H679.

The protein belongs to the peptidase S9C family.

It localises to the secreted. Functionally, extracellular dipeptidyl-peptidase which removes N-terminal dipeptides sequentially from polypeptides having unsubstituted N-termini. This is Probable dipeptidyl-peptidase 5 (dpp5) from Aspergillus niger.